A 639-amino-acid polypeptide reads, in one-letter code: Collagen alpha-1(XII) chain (639 aa).

In terms of domain architecture, VWFA spans Cys-1–Leu-114. Fibronectin type-III domains lie at Ala-130 to Pro-219, Ile-220 to Pro-310, Arg-311 to Pro-401, Thr-402 to Ser-490, Gly-491 to Asn-585, and Leu-586 to Leu-639. Residues Asp-473–Gln-496 are disordered.

This sequence belongs to the fibril-associated collagens with interrupted helices (FACIT) family. As to quaternary structure, trimer of identical chains each containing 190 kDa of non-triple-helical sequences. Post-translationally, the triple-helical tail is stabilized by disulfide bonds at each end. Prolines at the third position of the tripeptide repeating unit (G-X-Y) are hydroxylated in some or all of the chains. In terms of processing, O-glycosylated; glycosaminoglycan of chondroitin-sulfate type.

The protein resides in the secreted. Its subcellular location is the extracellular space. The protein localises to the extracellular matrix. Type XII collagen interacts with type I collagen-containing fibrils, the COL1 domain could be associated with the surface of the fibrils, and the COL2 and NC3 domains may be localized in the perifibrillar matrix. The protein is Collagen alpha-1(XII) chain (COL12A1) of Oryctolagus cuniculus (Rabbit).